A 96-amino-acid chain; its full sequence is Putative pterin-4-alpha-carbinolamine dehydratase (96 aa).

It belongs to the pterin-4-alpha-carbinolamine dehydratase family.

The catalysed reaction is (4aS,6R)-4a-hydroxy-L-erythro-5,6,7,8-tetrahydrobiopterin = (6R)-L-erythro-6,7-dihydrobiopterin + H2O. The polypeptide is Putative pterin-4-alpha-carbinolamine dehydratase (Prochlorococcus marinus (strain MIT 9313)).